The sequence spans 709 residues: MATAGGGSGADPGSRGLLRLLSFCVLLAGLCRGNSVERKIYIPLNKTAPCVRLLNATHQIGCQSSISGDTGVIHVVEKEEDLQWVLTDGPNPPYMVLLESKHFTRDLMEKLKGRTSRIAGLAVSLTKPSPASGFSPSVQCPNDGFGVYSNSYGPEFAHCREIQWNSLGNGLAYEDFSFPIFLLEDENETKVIKQCYQDHNLSQNGSAPTFPLCAMQLFSHMHAVISTATCMRRSSIQSTFSINPEIVCDPLSDYNVWSMLKPINTTGTLKPDDRVVVAATRLDSRSFFWNVAPGAESAVASFVTQLAAAEALQKAPDVTTLPRNVMFVFFQGETFDYIGSSRMVYDMEKGKFPVQLENVDSFVELGQVALRTSLELWMHTDPVSQKNESVRNQVEDLLATLEKSGAGVPAVILRRPNQSQPLPPSSLQRFLRARNISGVVLADHSGAFHNKYYQSIYDTAENINVSYPEWLSPEEDLNFVTDTAKALADVATVLGRALYELAGGTNFSDTVQADPQTVTRLLYGFLIKANNSWFQSILRQDLRSYLGDGPLQHYIAVSSPTNTTYVVQYALANLTGTVVNLTREQCQDPSKVPSENKDLYEYSWVQGPLHSNETDRLPRCVRSTARLARALSPAFELSQWSSTEYSTWTESRWKDIRARIFLIASKELELITLTVGFGILIFSLIVTYCINAKADVLFIAPREPGAVSY.

The signal sequence occupies residues 1 to 33 (MATAGGGSGADPGSRGLLRLLSFCVLLAGLCRG). The Extracellular portion of the chain corresponds to 34–669 (NSVERKIYIP…IFLIASKELE (636 aa)). N45 and N55 each carry an N-linked (GlcNAc...) asparagine glycan. Cystine bridges form between C50–C62 and C140–C159. 3 N-linked (GlcNAc...) asparagine glycosylation sites follow: N187, N200, and N204. 2 cysteine pairs are disulfide-bonded: C195-C213 and C230-C248. N-linked (GlcNAc...) asparagine glycans are attached at residues N264, N387, N417, N435, N464, N506, N530, N562, N573, N580, and N612. C586 and C620 are disulfide-bonded. Residues 670 to 690 (LITLTVGFGILIFSLIVTYCI) traverse the membrane as a helical segment. Topologically, residues 691–709 (NAKADVLFIAPREPGAVSY) are cytoplasmic.

Belongs to the nicastrin family. In terms of assembly, component of the gamma-secretase complex. The functional gamma-secretase complex is composed of at least four polypeptides: a presenilin homodimer (PSEN1 or PSEN2), nicastrin (NCSTN), APH1 (APH1A or APH1B) and PSENEN/PEN2. Binds to proteolytic processed C-terminal fragments C83 and C99 of the amyloid precursor protein (APP). Interacts with PSEN1 and PSEN2. N-glycosylated. Detected in brain (at protein level). Widely expressed.

It localises to the membrane. The protein localises to the cytoplasmic vesicle membrane. It is found in the melanosome. Essential subunit of the gamma-secretase complex, an endoprotease complex that catalyzes the intramembrane cleavage of integral membrane proteins such as Notch receptors and APP (amyloid-beta precursor protein). The gamma-secretase complex plays a role in Notch and Wnt signaling cascades and regulation of downstream processes via its role in processing key regulatory proteins, and by regulating cytosolic CTNNB1 levels. The chain is Nicastrin (NCSTN) from Homo sapiens (Human).